Consider the following 1226-residue polypeptide: AF4/FMR2 family member 3 (1226 aa).

Residues 24–37 show a composition bias toward basic and acidic residues; that stretch reads RNALRRKERERRNQ. Disordered regions lie at residues 24-65, 116-164, 197-299, 323-496, and 523-728; these read RNAL…GDEL, SRAQ…RATQ, ERPP…GETN, KVEP…SNQY, and IKST…SINA. Residues 42 to 52 show a composition bias toward polar residues; it reads DDGTFNSSYSL. Residues 123–132 show a composition bias toward low complexity; that stretch reads SSICSTTTST. Polar residues-rich tracts occupy residues 251-261 and 334-344; these read LKSSSETSVHC and KDSQLVSSGHN. Over residues 381-392 the composition is skewed to low complexity; sequence QQAAQRTALRAL. The segment covering 396 to 408 has biased composition (polar residues); it reads AVVQQPNCRTSVP. Low complexity predominate over residues 409–445; that stretch reads SSKGSSSSSSSGSSSSSSDSESSSGSDSETESSSSES. Polar residues predominate over residues 485–496; it reads QNESHGSESNQY. The span at 523–533 shows a compositional bias: basic and acidic residues; it reads IKSTCKEEQRP. Composition is skewed to low complexity over residues 550 to 561 and 569 to 579; these read PPAAVAVAVSAA and CAPAENAPAPA. The span at 589-607 shows a compositional bias: basic and acidic residues; it reads RRTERTSAGDGANCHRPEE. The span at 668 to 678 shows a compositional bias: low complexity; the sequence is TESSSSSSSSD. Residues 692–705 are compositionally biased toward polar residues; sequence KAQTVAASASSGND. A Phosphoserine modification is found at Ser-755. Disordered stretches follow at residues 783-856, 879-964, and 1100-1138; these read PQEP…LSAN, PISP…RDCK, and AAQA…SLSN. Positions 830-842 are enriched in basic and acidic residues; the sequence is REIKKSQGEKDSS. Residues 843–856 are compositionally biased toward polar residues; that stretch reads SRLATSTSNTLSAN. Ser-881 is modified (phosphoserine). Residues 894–909 show a composition bias toward polar residues; sequence EDLTSSSRPNGNSLFT.

The protein belongs to the AF4 family. As to expression, preferentially expressed in lymphoid tissues, highest levels being found in the thymus.

The protein localises to the nucleus. In terms of biological role, putative transcription activator that may function in lymphoid development and oncogenesis. Binds, in vitro, to double-stranded DNA. The protein is AF4/FMR2 family member 3 of Homo sapiens (Human).